A 515-amino-acid chain; its full sequence is ATP-dependent RNA helicase DBP3 (515 aa).

The tract at residues methionine 1 to glutamate 67 is disordered. Positions threonine 100 to alanine 127 match the Q motif motif. A Helicase ATP-binding domain is found at tryptophan 130–valine 306. ATP is bound at residue alanine 143–threonine 150. The short motif at aspartate 252–aspartate 255 is the DEAD box element. Positions arginine 335–glycine 484 constitute a Helicase C-terminal domain.

This sequence belongs to the DEAD box helicase family. DDX5/DBP2 subfamily.

It localises to the nucleus. It is found in the nucleolus. It catalyses the reaction ATP + H2O = ADP + phosphate + H(+). Its function is as follows. ATP-dependent RNA helicase required for 60S ribosomal subunit synthesis. Involved in efficient pre-rRNA processing, predominantly at site A3, which is necessary for the normal formation of 25S and 5.8S rRNAs. This Coccidioides immitis (strain RS) (Valley fever fungus) protein is ATP-dependent RNA helicase DBP3 (DBP3).